A 389-amino-acid chain; its full sequence is S-adenosylmethionine synthase 2 (389 aa).

Position 17 (His-17) interacts with ATP. Asp-19 contacts Mg(2+). A K(+)-binding site is contributed by Glu-45. L-methionine-binding residues include Glu-58 and Gln-102. The tract at residues 102–112 (QSADIAVGVDA) is flexible loop. ATP contacts are provided by residues 166 to 168 (DSK), 231 to 232 (RF), Asp-240, 246 to 247 (RK), Ala-263, and Lys-267. Asp-240 is an L-methionine binding site. An L-methionine-binding site is contributed by Lys-271.

It belongs to the AdoMet synthase family. As to quaternary structure, homotetramer; dimer of dimers. Mg(2+) serves as cofactor. Requires K(+) as cofactor.

It localises to the cytoplasm. The catalysed reaction is L-methionine + ATP + H2O = S-adenosyl-L-methionine + phosphate + diphosphate. It functions in the pathway amino-acid biosynthesis; S-adenosyl-L-methionine biosynthesis; S-adenosyl-L-methionine from L-methionine: step 1/1. Catalyzes the formation of S-adenosylmethionine (AdoMet) from methionine and ATP. The overall synthetic reaction is composed of two sequential steps, AdoMet formation and the subsequent tripolyphosphate hydrolysis which occurs prior to release of AdoMet from the enzyme. This chain is S-adenosylmethionine synthase 2, found in Rhodospirillum rubrum (strain ATCC 11170 / ATH 1.1.1 / DSM 467 / LMG 4362 / NCIMB 8255 / S1).